A 224-amino-acid chain; its full sequence is Deoxyribose-phosphate aldolase (224 aa).

The active-site Proton donor/acceptor is aspartate 93. Residue lysine 159 is the Schiff-base intermediate with acetaldehyde of the active site. Residue lysine 189 is the Proton donor/acceptor of the active site.

The protein belongs to the DeoC/FbaB aldolase family. DeoC type 1 subfamily.

Its subcellular location is the cytoplasm. The enzyme catalyses 2-deoxy-D-ribose 5-phosphate = D-glyceraldehyde 3-phosphate + acetaldehyde. It participates in carbohydrate degradation; 2-deoxy-D-ribose 1-phosphate degradation; D-glyceraldehyde 3-phosphate and acetaldehyde from 2-deoxy-alpha-D-ribose 1-phosphate: step 2/2. In terms of biological role, catalyzes a reversible aldol reaction between acetaldehyde and D-glyceraldehyde 3-phosphate to generate 2-deoxy-D-ribose 5-phosphate. In Mycobacterium bovis (strain ATCC BAA-935 / AF2122/97), this protein is Deoxyribose-phosphate aldolase.